Consider the following 76-residue polypeptide: Sulfur carrier protein TusA (76 aa).

C14 acts as the Cysteine persulfide intermediate in catalysis.

Belongs to the sulfur carrier protein TusA family. Interacts with IscS.

The protein resides in the cytoplasm. It participates in tRNA modification. Functionally, sulfur carrier protein involved in sulfur trafficking in the cell. Part of a sulfur-relay system required for 2-thiolation during synthesis of 2-thiouridine of the modified wobble base 5-methylaminomethyl-2-thiouridine (mnm(5)s(2)U) in tRNA. Interacts with IscS and stimulates its cysteine desulfurase activity. Accepts an activated sulfur from IscS, which is then transferred to TusD, and thus determines the direction of sulfur flow from IscS to 2-thiouridine formation. Also appears to be involved in sulfur transfer for the biosynthesis of molybdopterin. The sequence is that of Sulfur carrier protein TusA from Buchnera aphidicola subsp. Acyrthosiphon pisum (strain Tuc7).